Here is a 153-residue protein sequence, read N- to C-terminus: Putative phosphatidylglycerol/phosphatidylinositol transfer protein DDB_G0285639 (153 aa).

The first 21 residues, 1–21 (MIIKILLLIISISLFLNISIG), serve as a signal peptide directing secretion. Residues N17, N61, N87, N117, and N140 are each glycosylated (N-linked (GlcNAc...) asparagine).

This sequence belongs to the NPC2 family. In terms of assembly, monomer.

Catalyzes the intermembrane transfer of phosphatidylglycerol and phosphatidylinositol. This is Putative phosphatidylglycerol/phosphatidylinositol transfer protein DDB_G0285639 from Dictyostelium discoideum (Social amoeba).